Consider the following 860-residue polypeptide: Anoctamin-7 (860 aa).

Residues Met1–Gly297 are Cytoplasmic-facing. The disordered stretch occupies residues Asn24–Ser50. Residues Trp298 to Phe318 traverse the membrane as a helical segment. Residues Ser319–His362 are Extracellular-facing. A helical membrane pass occupies residues Gly363–Trp383. Over Lys384–Ala441 the chain is Cytoplasmic. A helical membrane pass occupies residues Gly442–Leu462. The Extracellular portion of the chain corresponds to Tyr463–Ser492. Residues Val493–Leu513 traverse the membrane as a helical segment. The Cytoplasmic portion of the chain corresponds to Thr514–Thr530. A helical membrane pass occupies residues Leu531–Phe551. Over Lys552 to Gln652 the chain is Extracellular. Residues Phe653–Asn673 traverse the membrane as a helical segment. Over Asn674–Gly701 the chain is Cytoplasmic. The chain crosses the membrane as a helical span at residues Ile702–Leu722. Over Ala723–Pro779 the chain is Extracellular. 2 N-linked (GlcNAc...) asparagine glycosylation sites follow: Asn747 and Asn762. A helical membrane pass occupies residues Thr780–Phe800. Topologically, residues Ser801 to Ala860 are cytoplasmic.

Belongs to the anoctamin family.

Its subcellular location is the cell membrane. It is found in the endoplasmic reticulum. It carries out the reaction a 1,2-diacyl-sn-glycero-3-phospho-L-serine(in) = a 1,2-diacyl-sn-glycero-3-phospho-L-serine(out). The catalysed reaction is a beta-D-galactosyl-(1&lt;-&gt;1')-N-acylsphing-4-enine(out) = a beta-D-galactosyl-(1&lt;-&gt;1')-N-acylsphing-4-enine(in). It catalyses the reaction a 1,2-diacyl-sn-glycero-3-phosphocholine(in) = a 1,2-diacyl-sn-glycero-3-phosphocholine(out). Has calcium-dependent phospholipid scramblase activity; scrambles phosphatidylserine, phosphatidylcholine and galactosylceramide. Does not exhibit calcium-activated chloride channel (CaCC) activity. May play a role in cell-cell interactions. This is Anoctamin-7 (Ano7) from Rattus norvegicus (Rat).